Here is a 39-residue protein sequence, read N- to C-terminus: Photosystem II reaction center protein L (39 aa).

A helical membrane pass occupies residues 18–38; the sequence is SLYLGLLSVLVLGILFSSYFF.

The protein belongs to the PsbL family. As to quaternary structure, PSII is composed of 1 copy each of membrane proteins PsbA, PsbB, PsbC, PsbD, PsbE, PsbF, PsbH, PsbI, PsbJ, PsbK, PsbL, PsbM, PsbT, PsbX, PsbY, Psb30/Ycf12, peripheral proteins PsbO, CyanoQ (PsbQ), PsbU, PsbV and a large number of cofactors. It forms dimeric complexes.

Its subcellular location is the cellular thylakoid membrane. In terms of biological role, one of the components of the core complex of photosystem II (PSII). PSII is a light-driven water:plastoquinone oxidoreductase that uses light energy to abstract electrons from H(2)O, generating O(2) and a proton gradient subsequently used for ATP formation. It consists of a core antenna complex that captures photons, and an electron transfer chain that converts photonic excitation into a charge separation. This subunit is found at the monomer-monomer interface and is required for correct PSII assembly and/or dimerization. The chain is Photosystem II reaction center protein L from Prochlorococcus marinus subsp. pastoris (strain CCMP1986 / NIES-2087 / MED4).